Consider the following 359-residue polypeptide: uncharacterized protein (359 aa).

Helical transmembrane passes span 4 to 24 (ELFVNLTILITFNYLFTHLFK), 36 to 56 (FQAVKGLACGLLGVILMVFGF), 68 to 88 (IPIMIAALYGGWVSTATALAM), 94 to 114 (LLITMNTSALYSVIIICIAAI), 129 to 149 (HAFYLLIITNSLISFSFYFLI), and 155 to 175 (ELHLYFWIISIAGGMLSLYII). The 135-residue stretch at 223 to 357 (FQFALIYMDI…GRNRVCFSEK (135 aa)) folds into the GGDEF domain.

It localises to the cell membrane. This is an uncharacterized protein from Bacillus subtilis (strain 168).